A 541-amino-acid chain; its full sequence is Protein wntless homolog (541 aa).

Residues 1-42 (MAGAIIENMSTRKLCIVGGILLVFQVIAFLVGGLIAPSPTTA) form the signal peptide. Residues 43–232 (VPYMSVKCID…GIHQNGGFTK (190 aa)) lie on the Lumenal side of the membrane. Residues 233–253 (VWFAMKTFLTPSILIIMVWYW) form a helical membrane-spanning segment. Over 254–268 (RRITLMTRAPVLLEK) the chain is Cytoplasmic. The helical transmembrane segment at 269–289 (VIFALGISMTFINIPVEWFSI) threads the bilayer. At 290-303 (GFDWTWMLLFGDIR) the chain is on the lumenal side. Residues 304-324 (QGIFYAMLLSFWIIFCGEHMM) form a helical membrane-spanning segment. Residues 325 to 331 (DQNERNR) are Cytoplasmic-facing. The chain crosses the membrane as a helical span at residues 332–352 (LSGYWKQVGPIAVGSFCLFIF). Over 353 to 380 (DMCERGVQLKNPFYSIWTTEVGTELAMA) the chain is Lumenal. A helical membrane pass occupies residues 381 to 401 (FIIVAGICLCLYFLFLCFMVF). The Cytoplasmic portion of the chain corresponds to 402–431 (QVFRNISGKQSSLPAMSKARRLHYEGLIFR). The chain crosses the membrane as a helical span at residues 432-452 (FKFLMLITLACAAMTVIFFIV). The Lumenal segment spans residues 453–471 (SQVTEGHWKWGDITIQVNS). The helical transmembrane segment at 472–492 (AFFTGIYGMWNLYVFALMFLY) threads the bilayer. At 493–541 (APSHKNYGEDQSNGDLGVSSGEELQLTTTITHVDGPTEVYKLARKEAQE) the chain is on the cytoplasmic side.

The protein belongs to the wntless family.

The protein resides in the golgi apparatus membrane. The protein localises to the cytoplasmic vesicle membrane. In terms of biological role, may play an essential role in Wnt signaling pathway. May be required for Wnt-dependent patterning processes. This chain is Protein wntless homolog (WLS), found in Gallus gallus (Chicken).